The primary structure comprises 261 residues: Indole-3-glycerol phosphate synthase (261 aa).

Belongs to the TrpC family.

It carries out the reaction 1-(2-carboxyphenylamino)-1-deoxy-D-ribulose 5-phosphate + H(+) = (1S,2R)-1-C-(indol-3-yl)glycerol 3-phosphate + CO2 + H2O. It functions in the pathway amino-acid biosynthesis; L-tryptophan biosynthesis; L-tryptophan from chorismate: step 4/5. In Campylobacter hominis (strain ATCC BAA-381 / DSM 21671 / CCUG 45161 / LMG 19568 / NCTC 13146 / CH001A), this protein is Indole-3-glycerol phosphate synthase.